The sequence spans 383 residues: tRNA-specific 2-thiouridylase MnmA (383 aa).

ATP contacts are provided by residues 6–13 (AMSGGVDS) and leucine 32. The Nucleophile role is filled by cysteine 101. Cysteine 101 and cysteine 199 form a disulfide bridge. Glycine 125 contacts ATP. Residues 148-150 (KDQ) are interaction with tRNA. Cysteine 199 serves as the catalytic Cysteine persulfide intermediate.

The protein belongs to the MnmA/TRMU family.

The protein resides in the cytoplasm. The enzyme catalyses S-sulfanyl-L-cysteinyl-[protein] + uridine(34) in tRNA + AH2 + ATP = 2-thiouridine(34) in tRNA + L-cysteinyl-[protein] + A + AMP + diphosphate + H(+). In terms of biological role, catalyzes the 2-thiolation of uridine at the wobble position (U34) of tRNA, leading to the formation of s(2)U34. This Kocuria rhizophila (strain ATCC 9341 / DSM 348 / NBRC 103217 / DC2201) protein is tRNA-specific 2-thiouridylase MnmA.